Consider the following 1491-residue polypeptide: Copper-transporting ATPase 1 (1491 aa).

Topologically, residues 1 to 644 (MEPSVDANSI…KREIKQWRGS (644 aa)) are cytoplasmic. 2 consecutive HMA domains span residues 8 to 74 (NSIT…FDAL) and 85 to 151 (TNTV…LDMG). Cu(+) contacts are provided by Thr18, Cys19, and Cys22. Thr152 bears the Phosphothreonine mark. Residues 171 to 237 (VMLKMKVEGM…QIEAVGFPAF (67 aa)) enclose the HMA 3 domain. Cu(+)-binding residues include Cys182 and Cys185. The residue at position 270 (Ser270) is a Phosphoserine. The region spanning 277–343 (STTMFTIEGM…AIEAISPGQY (67 aa)) is the HMA 4 domain. Cu(+) is bound by residues Cys288 and Cys291. Phosphothreonine is present on Thr327. Phosphoserine occurs at positions 339, 353, 357, and 362. HMA domains lie at 377–443 (QEAV…FDAA), 479–545 (NKCY…FGAM), and 555–621 (GILE…FEAS). Cu(+)-binding residues include Cys388, Cys391, Cys490, Cys493, Cys566, and Cys569. Residues 645–666 (FLVSLFFCIPVMGLMVYMMVMD) form a helical membrane-spanning segment. At 667–705 (HHLATLHHNQNMSNEEMINMHSAMFLERQILPGLSIMNL) the chain is on the extracellular side. Asn677 carries an N-linked (GlcNAc...) asparagine glycan. The chain crosses the membrane as a helical span at residues 706-725 (LSLLLCLPVQFCGGWYFYIQ). At 726 to 732 (AYKALKH) the chain is on the cytoplasmic side. Residues 733–753 (KTANMDVLIVLATTIAFAYSL) form a helical membrane-spanning segment. At 754 to 772 (VILLVAMFERAKVNPITFF) the chain is on the extracellular side. A helical membrane pass occupies residues 773–793 (DTPPMLFVFIALGRWLEHIAK). Over 794-926 (GKTSEALAKL…SKAPIQQFAD (133 aa)) the chain is Cytoplasmic. Residues 927–950 (KLSGYFVPFIVLVSIVTLLVWIII) form a helical membrane-spanning segment. The Extracellular portion of the chain corresponds to 951-980 (GFQNFEIVETYFPGYNRSISRTETIIRFAF). Asn966 carries an N-linked (GlcNAc...) asparagine glycan. The helical transmembrane segment at 981–1002 (QASITVLCIACPCSLGLATPTA) threads the bilayer. The Cytoplasmic portion of the chain corresponds to 1003–1347 (VMVGTGVGAQ…LSRKTVKRIR (345 aa)). Asp1035 acts as the 4-aspartylphosphate intermediate in catalysis. Glu1072 provides a ligand contact to ATP. Residue Thr1203 is modified to Phosphothreonine. Mg(2+) contacts are provided by Asp1292 and Asp1296. Residues 1348–1365 (INFVFALIYNLVGIPIAA) traverse the membrane as a helical segment. The Extracellular portion of the chain corresponds to 1366–1376 (GVFLPIGLVLQ). A helical transmembrane segment spans residues 1377 to 1396 (PWMGSAAMAASSVSVVLSSL). At 1397-1491 (FLKLYRKPTY…DFREDDDTTL (95 aa)) the chain is on the cytoplasmic side. 5 positions are modified to phosphoserine: Ser1421, Ser1423, Ser1451, Ser1454, and Ser1457. An Endocytosis signal motif is present at residues 1458-1459 (LL). Ser1460, Ser1464, Ser1467, and Ser1477 each carry phosphoserine. The segment at 1477-1491 (SLLVGDFREDDDTTL) is PDZD11-binding. Positions 1478–1479 (LL) match the Endocytosis signal motif.

The protein belongs to the cation transport ATPase (P-type) (TC 3.A.3) family. Type IB subfamily. As to quaternary structure, monomer. Interacts with PDZD11. Interacts with ATOX1 and COMMD1. Interacts with TYRP1. Directly interacts with SOD3; this interaction is copper-dependent and is required for SOD3 activity. Widely expressed. Highly expressed in pituitary endocrine cells. Expressed in melanocytes (at protein level). Expressed in motor neuron (at protein level). Expressed in hippocampal neuron (at protein level). In the kidney, it is detected in the proximal and distal tubules (at protein level). Expressed in aorta (at protein level).

The protein localises to the golgi apparatus. The protein resides in the trans-Golgi network membrane. It localises to the cell membrane. It is found in the melanosome membrane. Its subcellular location is the early endosome membrane. The protein localises to the cell projection. The protein resides in the axon. It localises to the dendrite. It is found in the postsynaptic density. It carries out the reaction Cu(+)(in) + ATP + H2O = Cu(+)(out) + ADP + phosphate + H(+). In terms of biological role, ATP-driven copper (Cu(+)) ion pump that plays an important role in intracellular copper ion homeostasis. Within a catalytic cycle, acquires Cu(+) ion from donor protein on the cytoplasmic side of the membrane and delivers it to acceptor protein on the lumenal side. The transfer of Cu(+) ion across the membrane is coupled to ATP hydrolysis and is associated with a transient phosphorylation that shifts the pump conformation from inward-facing to outward-facing state. Under physiological conditions, at low cytosolic copper concentration, it is localized at the trans-Golgi network (TGN) where it transfers Cu(+) ions to cuproenzymes of the secretory pathway. Upon elevated cytosolic copper concentrations, it relocalizes to the plasma membrane where it is responsible for the export of excess Cu(+) ions. May play a dual role in neuron function and survival by regulating cooper efflux and neuronal transmission at the synapse as well as by supplying Cu(+) ions to enzymes such as PAM, TYR and SOD3. In the melanosomes of pigmented cells, provides copper cofactor to TYR to form an active TYR holoenzyme for melanin biosynthesis. This is Copper-transporting ATPase 1 from Mus musculus (Mouse).